The sequence spans 578 residues: Octopamine receptor 2 (578 aa).

Over 1–84 (MMSFPIALFA…YDSITIFITV (84 aa)) the chain is Extracellular. Residues asparagine 13, asparagine 38, asparagine 46, and asparagine 59 are each glycosylated (N-linked (GlcNAc...) asparagine). Residues 85-107 (AVVLTLITLWTILGNFFVLMALY) form a helical membrane-spanning segment. Residues 108-117 (RYGTLRTMSN) are Cytoplasmic-facing. A helical transmembrane segment spans residues 118-139 (CLIGNLAISDLLLAVTVLPIST). The Extracellular segment spans residues 140-156 (VHDLLGYWVFGEFTCTL). Cysteines 154 and 239 form a disulfide. The chain crosses the membrane as a helical span at residues 157–177 (WLCMDVLYCTASIWGLCTVAF). The Cytoplasmic portion of the chain corresponds to 178–197 (DRYLATVYPVWYHDQRSVRK). The chain crosses the membrane as a helical span at residues 198 to 220 (AVGCIVFVWIFSIVISFAPFIGW). At 221-251 (QHMIPSFFSFNASIQRYQCILFTSSSYVLYS) the chain is on the extracellular side. Residue asparagine 231 is glycosylated (N-linked (GlcNAc...) asparagine). A helical membrane pass occupies residues 252-272 (SMGSFVIPAILMAFMYVRIFV). Over 273-495 (VLHNQSRGVK…ELREQRATKR (223 aa)) the chain is Cytoplasmic. Residues 496–517 (MLLIMACFCVCWMPFLFMYILR) form a helical membrane-spanning segment. Residues 518 to 531 (SVCDTCHMNQHFVA) lie on the Extracellular side of the membrane. Residues 532 to 553 (AIIWLGYVNSSLNPVLYTLFND) form a helical membrane-spanning segment. Residues 554–578 (DFKVAFKRLIGARSPSAYRSPGPRR) are Cytoplasmic-facing.

Belongs to the G-protein coupled receptor 1 family.

It localises to the cell membrane. Functionally, receptor for octopamine. Octopamine (OA) is a neurotransmitter, neurohormone, and neuromodulator in invertebrates. This receptor induces a long lasting opening of voltage- independent chloride channels, a process which seems to involve protein phosphorylation but does not require either cAPK or PKC. The rank order of potency for agonists is p-synephrine &gt; p-octopamine &gt; xylometazoline &gt; B-HT920 &gt; norepinephrine = clonidine &gt; epinephrine &gt; p-tyramine &gt; phenylephrine = oxymetazoline = mehoxamine = dopamine &gt; serotonin &gt; histamine. For antagonists, the rank order is rauwolscine = mianserin &gt; phentolamine &gt; chlorpromazine &gt; spiperone &gt; yohimbine &gt; propanolol &gt; alprenolol &gt; prazosine &gt; pindolol. This Lymnaea stagnalis (Great pond snail) protein is Octopamine receptor 2.